Reading from the N-terminus, the 206-residue chain is Large ribosomal subunit protein uL4 (206 aa).

The tract at residues 45–85 is disordered; that stretch reads QGNRAQKDREQVKHTTKKPWRQKGTGRARAGMSSSPLWRGG. A compositionally biased stretch (basic residues) spans 58-70; the sequence is HTTKKPWRQKGTG.

The protein belongs to the universal ribosomal protein uL4 family. In terms of assembly, part of the 50S ribosomal subunit.

In terms of biological role, one of the primary rRNA binding proteins, this protein initially binds near the 5'-end of the 23S rRNA. It is important during the early stages of 50S assembly. It makes multiple contacts with different domains of the 23S rRNA in the assembled 50S subunit and ribosome. Functionally, forms part of the polypeptide exit tunnel. The chain is Large ribosomal subunit protein uL4 from Burkholderia mallei (strain NCTC 10247).